Reading from the N-terminus, the 552-residue chain is Small ribosomal subunit protein bS1 (552 aa).

S1 motif domains are found at residues 31 to 101, 116 to 179, 200 to 268, 285 to 355, 372 to 440, and 457 to 521; these read TIKE…ISQQ, NAII…ISRK, TEPV…LSIK, GYAI…VSLK, GDIV…LSAK, and DSVI…ASVH.

The protein belongs to the bacterial ribosomal protein bS1 family.

In terms of biological role, binds mRNA; thus facilitating recognition of the initiation point. It is needed to translate mRNA with a short Shine-Dalgarno (SD) purine-rich sequence. This is Small ribosomal subunit protein bS1 (rpsA) from Helicobacter pylori (strain J99 / ATCC 700824) (Campylobacter pylori J99).